We begin with the raw amino-acid sequence, 240 residues long: MSQLKELPFSTLQFYATAPYPCSYLPERQARSQVAAPGHLINADTYCQLVQQGFRRSGLFTYRPHCDNCQACIPVRVDSVNYTPNRSQRRAWKAHQGLRAFVAELAWSPEHYSLYTRYQQGRHPGGGMDDDSRSQYAQFLLTSRVNTRLVEFRQPEGQLVMVSIIDVLDDGLSSVYTFYDPELAGSLGTYSILWQIEQCRMLELPWLYLGYWIKDSRKMAYKAGFLPQERYIDGQWTAPE.

Belongs to the R-transferase family. Bpt subfamily.

The protein localises to the cytoplasm. It carries out the reaction N-terminal L-glutamyl-[protein] + L-leucyl-tRNA(Leu) = N-terminal L-leucyl-L-glutamyl-[protein] + tRNA(Leu) + H(+). The catalysed reaction is N-terminal L-aspartyl-[protein] + L-leucyl-tRNA(Leu) = N-terminal L-leucyl-L-aspartyl-[protein] + tRNA(Leu) + H(+). Functions in the N-end rule pathway of protein degradation where it conjugates Leu from its aminoacyl-tRNA to the N-termini of proteins containing an N-terminal aspartate or glutamate. The chain is Aspartate/glutamate leucyltransferase from Bordetella avium (strain 197N).